The primary structure comprises 798 residues: Pentatricopeptide repeat-containing protein At5g67570, chloroplastic (798 aa).

Disordered regions lie at residues 1-21 (MDASVVRFSQSPARVPPEFEP) and 50-73 (IQKHNRRTKRETESEAEVYTEAQK). PPR repeat units follow at residues 254-284 (SRFVYTKLLSVLGFARRPQEALQIFNQMLGD), 290-324 (DMAAYHCIAVTLGQAGLLKELLKVIERMRQKPTKL), 340-374 (DLVVYNAILNACVPTLQWKAVSWVFVELRKNGLRP), 375-409 (NGATYGLAMEVMLESGKFDRVHDFFRKMKSSGEAP), 410-444 (KAITYKVLVRALWREGKIEEAVEAVRDMEQKGVIG), 445-480 (TGSVYYELACCLCNNGRWCDAMLEVGRMKRLENCRP), 481-511 (LEITFTGLIAASLNGGHVDDCMAIFQYMKDK), 515-545 (NIGTANMMLKVYGRNDMFSEAKELFEEIVSR), 553-587 (NEYTYSFMLEASARSLQWEYFEHVYQTMVLSGYQM), and 588-622 (DQTKHASMLIEASRAGKWSLLEHAFDAVLEDGEIP).

The protein belongs to the PPR family. P subfamily. Interacts (via C-terminus) with SIGF (via N-terminus).

It localises to the plastid. The protein localises to the chloroplast. Functionally, involved in the regulation of early chloroplast development and chloroplast gene expression in a SIGF-dependent manner. The chain is Pentatricopeptide repeat-containing protein At5g67570, chloroplastic (DG1) from Arabidopsis thaliana (Mouse-ear cress).